A 397-amino-acid chain; its full sequence is Bifunctional enzyme IspD/IspF (397 aa).

Residues 1-236 form a 2-C-methyl-D-erythritol 4-phosphate cytidylyltransferase region; it reads MSIAAVILAA…QKKMQMFPDI (236 aa). The segment at 237–397 is 2-C-methyl-D-erythritol 2,4-cyclodiphosphate synthase; it reads RTGNGYDVHS…NVLYPGEIPK (161 aa). A divalent metal cation-binding residues include D243 and H245. 4-CDP-2-C-methyl-D-erythritol 2-phosphate contacts are provided by residues 243–245 and 269–270; these read DVH and HS. Residue H277 participates in a divalent metal cation binding. Residues 291 to 293, 367 to 370, F374, and R377 contribute to the 4-CDP-2-C-methyl-D-erythritol 2-phosphate site; these read DIG and TTNE.

The protein in the N-terminal section; belongs to the IspD/TarI cytidylyltransferase family. IspD subfamily. In the C-terminal section; belongs to the IspF family. The cofactor is a divalent metal cation.

The enzyme catalyses 2-C-methyl-D-erythritol 4-phosphate + CTP + H(+) = 4-CDP-2-C-methyl-D-erythritol + diphosphate. The catalysed reaction is 4-CDP-2-C-methyl-D-erythritol 2-phosphate = 2-C-methyl-D-erythritol 2,4-cyclic diphosphate + CMP. Its pathway is isoprenoid biosynthesis; isopentenyl diphosphate biosynthesis via DXP pathway; isopentenyl diphosphate from 1-deoxy-D-xylulose 5-phosphate: step 2/6. It functions in the pathway isoprenoid biosynthesis; isopentenyl diphosphate biosynthesis via DXP pathway; isopentenyl diphosphate from 1-deoxy-D-xylulose 5-phosphate: step 4/6. Bifunctional enzyme that catalyzes the formation of 4-diphosphocytidyl-2-C-methyl-D-erythritol from CTP and 2-C-methyl-D-erythritol 4-phosphate (MEP) (IspD), and catalyzes the conversion of 4-diphosphocytidyl-2-C-methyl-D-erythritol 2-phosphate (CDP-ME2P) to 2-C-methyl-D-erythritol 2,4-cyclodiphosphate (ME-CPP) with a corresponding release of cytidine 5-monophosphate (CMP) (IspF). The protein is Bifunctional enzyme IspD/IspF of Bartonella henselae (strain ATCC 49882 / DSM 28221 / CCUG 30454 / Houston 1) (Rochalimaea henselae).